A 471-amino-acid chain; its full sequence is Replication factor C large subunit (471 aa).

44–51 (GSPGIGKT) is an ATP binding site. A compositionally biased stretch (basic and acidic residues) spans 422–431 (RTDAAVDHSE). The disordered stretch occupies residues 422 to 471 (RTDAAVDHSEGAFAGAVREDNTDEDSAADETTDGDEDTGADSQRGLDEFF). Acidic residues predominate over residues 442 to 460 (NTDEDSAADETTDGDEDTG).

This sequence belongs to the activator 1 small subunits family. RfcL subfamily. In terms of assembly, heteromultimer composed of small subunits (RfcS) and large subunits (RfcL).

Part of the RFC clamp loader complex which loads the PCNA sliding clamp onto DNA. The protein is Replication factor C large subunit of Halobacterium salinarum (strain ATCC 29341 / DSM 671 / R1).